The chain runs to 118 residues: Non-specific lipid-transfer protein 3 (118 aa).

Positions 1–25 (MARSMNLACVALVMCMVVIAPMAEA) are cleaved as a signal peptide. 4 disulfides stabilise this stretch: Cys-29–Cys-76, Cys-39–Cys-53, Cys-54–Cys-99, and Cys-74–Cys-113.

It belongs to the plant LTP family.

In terms of biological role, plant non-specific lipid-transfer proteins transfer phospholipids as well as galactolipids across membranes. May play a role in wax or cutin deposition in the cell walls of expanding epidermal cells and certain secretory tissues. In Lens culinaris (Lentil), this protein is Non-specific lipid-transfer protein 3.